A 222-amino-acid chain; its full sequence is Interleukin-12 subunit alpha (222 aa).

Positions 1–25 (MCPLRSLFLMATLVFLNHLDHLSLA) are cleaved as a signal peptide. 3 disulfide bridges follow: cysteine 40–cysteine 113, cysteine 67–cysteine 199, and cysteine 88–cysteine 126. 2 N-linked (GlcNAc...) asparagine glycosylation sites follow: asparagine 96 and asparagine 174.

It belongs to the IL-6 superfamily. As to quaternary structure, heterodimer with IL12B; disulfide-linked. This heterodimer is known as interleukin IL-12. Heterodimer with EBI3/IL27B; not disulfide-linked. This heterodimer is known as interleukin IL-35. Interacts with NBR1; this interaction promotes IL-12 secretion.

The protein resides in the secreted. In terms of biological role, heterodimerizes with IL12B to form the IL-12 cytokine or with EBI3/IL27B to form the IL-35 cytokine. IL-12 is primarily produced by professional antigen-presenting cells (APCs) such as B-cells and dendritic cells (DCs) as well as macrophages and granulocytes and regulates T-cell and natural killer-cell responses, induces the production of interferon-gamma (IFN-gamma), favors the differentiation of T-helper 1 (Th1) cells and is an important link between innate resistance and adaptive immunity. Mechanistically, exerts its biological effects through a receptor composed of IL12R1 and IL12R2 subunits. Binding to the receptor results in the rapid tyrosine phosphorylation of a number of cellular substrates including the JAK family kinases TYK2 and JAK2. In turn, recruited STAT4 gets phosphorylated and translocates to the nucleus where it regulates cytokine/growth factor responsive genes. As part of IL-35, plays essential roles in maintaining the immune homeostasis of the liver microenvironment and also functions as an immune-suppressive cytokine. Mediates biological events through unconventional receptors composed of IL12RB2 and gp130/IL6ST heterodimers or homodimers. Signaling requires the transcription factors STAT1 and STAT4, which form a unique heterodimer that binds to distinct DNA sites. In Lama glama (Llama), this protein is Interleukin-12 subunit alpha (IL12A).